A 129-amino-acid polypeptide reads, in one-letter code: Small ribosomal subunit protein uS11 (129 aa).

The protein belongs to the universal ribosomal protein uS11 family. In terms of assembly, part of the 30S ribosomal subunit. Interacts with proteins S7 and S18. Binds to IF-3.

Located on the platform of the 30S subunit, it bridges several disparate RNA helices of the 16S rRNA. Forms part of the Shine-Dalgarno cleft in the 70S ribosome. This chain is Small ribosomal subunit protein uS11, found in Bacillus mycoides (strain KBAB4) (Bacillus weihenstephanensis).